Consider the following 226-residue polypeptide: Enolase-phosphatase E1 (226 aa).

The protein belongs to the HAD-like hydrolase superfamily. MasA/MtnC family. As to quaternary structure, monomer. Mg(2+) is required as a cofactor.

It catalyses the reaction 5-methylsulfanyl-2,3-dioxopentyl phosphate + H2O = 1,2-dihydroxy-5-(methylsulfanyl)pent-1-en-3-one + phosphate. It functions in the pathway amino-acid biosynthesis; L-methionine biosynthesis via salvage pathway; L-methionine from S-methyl-5-thio-alpha-D-ribose 1-phosphate: step 3/6. It participates in amino-acid biosynthesis; L-methionine biosynthesis via salvage pathway; L-methionine from S-methyl-5-thio-alpha-D-ribose 1-phosphate: step 4/6. Bifunctional enzyme that catalyzes the enolization of 2,3-diketo-5-methylthiopentyl-1-phosphate (DK-MTP-1-P) into the intermediate 2-hydroxy-3-keto-5-methylthiopentenyl-1-phosphate (HK-MTPenyl-1-P), which is then dephosphorylated to form the acireductone 1,2-dihydroxy-3-keto-5-methylthiopentene (DHK-MTPene). In Shewanella putrefaciens (strain CN-32 / ATCC BAA-453), this protein is Enolase-phosphatase E1.